Reading from the N-terminus, the 253-residue chain is Probable transcriptional regulatory protein slr0989 (253 aa).

The disordered stretch occupies residues 1-22 (MGGRKWQSIKRQKARVDAQKGK).

It belongs to the TACO1 family.

It is found in the cytoplasm. This Synechocystis sp. (strain ATCC 27184 / PCC 6803 / Kazusa) protein is Probable transcriptional regulatory protein slr0989.